We begin with the raw amino-acid sequence, 256 residues long: Phosphonates import ATP-binding protein PhnC (256 aa).

Residues 7–251 enclose the ABC transporter domain; it reads IEMKNVTKVY…VFDNIYNGGK (245 aa). ATP is bound at residue 40 to 47; that stretch reads GLSGAGKS.

This sequence belongs to the ABC transporter superfamily. Phosphonates importer (TC 3.A.1.9.1) family. As to quaternary structure, the complex is composed of two ATP-binding proteins (PhnC), two transmembrane proteins (PhnE) and a solute-binding protein (PhnD).

The protein resides in the cell membrane. The catalysed reaction is phosphonate(out) + ATP + H2O = phosphonate(in) + ADP + phosphate + H(+). Part of the ABC transporter complex PhnCDE involved in phosphonates import. Responsible for energy coupling to the transport system. In Lactobacillus delbrueckii subsp. bulgaricus (strain ATCC 11842 / DSM 20081 / BCRC 10696 / JCM 1002 / NBRC 13953 / NCIMB 11778 / NCTC 12712 / WDCM 00102 / Lb 14), this protein is Phosphonates import ATP-binding protein PhnC.